The primary structure comprises 301 residues: Ribosomal protein L11 methyltransferase (301 aa).

Residues Thr146, Gly167, Asp189, and Asn237 each contribute to the S-adenosyl-L-methionine site.

It belongs to the methyltransferase superfamily. PrmA family.

It is found in the cytoplasm. The catalysed reaction is L-lysyl-[protein] + 3 S-adenosyl-L-methionine = N(6),N(6),N(6)-trimethyl-L-lysyl-[protein] + 3 S-adenosyl-L-homocysteine + 3 H(+). Functionally, methylates ribosomal protein L11. This chain is Ribosomal protein L11 methyltransferase, found in Prochlorococcus marinus (strain MIT 9303).